The primary structure comprises 1450 residues: Protein clueless (1450 aa).

2 disordered regions span residues 1–126 and 266–287; these read MALE…PGSE and KTRPDSVDCTPPEYVTPGVSEP. Low complexity predominate over residues 29–60; that stretch reads NNSSAGKKQQQQQQPNQNQNLVNGNGNAADGP. Positions 62-71 are enriched in basic residues; the sequence is AKKKGKKNRN. Residue Ser271 is modified to Phosphoserine. Residues 425–667 form the Clu domain; that stretch reads RAEDAFSSKL…RTFPPDVNFL (243 aa). Composition is skewed to basic and acidic residues over residues 725-734 and 743-765; these read KQSEKTEEKA and KESSETKEAEAEKPVEKKEEEKQ. Disordered stretches follow at residues 725–775 and 959–1011; these read KQSE…TKTA and PAVS…SDWT. Basic residues predominate over residues 968 to 983; that stretch reads KKRSNGNKHNKHKSKG. Residues 984-1008 show a composition bias toward low complexity; that stretch reads NKQQASGNQNGSSAGSSSGGSSSSS. 3 TPR repeats span residues 1102–1135, 1228–1261, and 1263–1296; these read AYNFYTTGQAKIQQGMFKEGYELISEALNLLNNV, ALIDSNISLILHALGEYELSLRFIEHALKLNIKY, and GSKAMHVAFSYHLMARTQSCMGDFRSALNNEKET. A disordered region spans residues 1410–1450; the sequence is NNNGDTEAETKDATKDNKDLAGASTQLTNGDKDAETAVASS. Over residues 1417–1428 the composition is skewed to basic and acidic residues; it reads AETKDATKDNKD.

Belongs to the CLU family.

It is found in the cytoplasm. MRNA-binding protein involved in proper cytoplasmic distribution of mitochondria. The chain is Protein clueless from Drosophila ananassae (Fruit fly).